The sequence spans 81 residues: Photosystem I iron-sulfur center (81 aa).

4Fe-4S ferredoxin-type domains lie at 2–31 (AHSVKIYATCIGCTQCVRACPTDVLEMVPW) and 39–68 (IASAPRTEDCVGCKRCESACPTDFLSVRVY). Cys11, Cys14, Cys17, Cys21, Cys48, Cys51, Cys54, and Cys58 together coordinate [4Fe-4S] cluster.

As to quaternary structure, the eukaryotic PSI reaction center is composed of at least 11 subunits. It depends on [4Fe-4S] cluster as a cofactor.

The protein resides in the plastid. The protein localises to the chloroplast thylakoid membrane. The enzyme catalyses reduced [plastocyanin] + hnu + oxidized [2Fe-2S]-[ferredoxin] = oxidized [plastocyanin] + reduced [2Fe-2S]-[ferredoxin]. Apoprotein for the two 4Fe-4S centers FA and FB of photosystem I (PSI); essential for photochemical activity. FB is the terminal electron acceptor of PSI, donating electrons to ferredoxin. The C-terminus interacts with PsaA/B/D and helps assemble the protein into the PSI complex. Required for binding of PsaD and PsaE to PSI. PSI is a plastocyanin-ferredoxin oxidoreductase, converting photonic excitation into a charge separation, which transfers an electron from the donor P700 chlorophyll pair to the spectroscopically characterized acceptors A0, A1, FX, FA and FB in turn. The sequence is that of Photosystem I iron-sulfur center from Mesostigma viride (Green alga).